The sequence spans 398 residues: RNA-binding protein rnc1 (398 aa).

Residues 40–78 (KVSIPTPKPSTPLSTLTNGSTIQQSMTNQPEPTSQVPPI) form a disordered region. A Phosphothreonine modification is found at Thr-50. Residues 57 to 76 (NGSTIQQSMTNQPEPTSQVP) show a composition bias toward polar residues. KH domains lie at 93–157 (QLTL…YRFI) and 178–243 (PRKL…IWEI). Residues 274–290 (ASTASPQQVSPPAAPST) show a composition bias toward low complexity. The tract at residues 274-295 (ASTASPQQVSPPAAPSTTSGEA) is disordered. Residues 320-385 (KVTQNISIPA…EENEKALFLL (66 aa)) form the KH 3 domain.

In terms of processing, phosphorylated by pmk1. Phosphorylation causes enhancement of the RNA-binding activity.

It localises to the cytoplasm. Its function is as follows. Binds and stabilizes pmp1 mRNA and hence acts as a negative regulator of pmk1 signaling. Overexpression suppresses the Cl(-) sensitivity of calcineurin deletion. This Schizosaccharomyces pombe (strain 972 / ATCC 24843) (Fission yeast) protein is RNA-binding protein rnc1.